Consider the following 983-residue polypeptide: ABC transporter A family member 2 (983 aa).

The next 6 membrane-spanning stretches (helical) occupy residues 33-53 (FLQLFASFFFILLIFCIQAAM), 221-241 (IVALDTIGPTFFLAVAMFGFV), 279-299 (ILTAISALLTVLFGMMFQFDF), 305-325 (FPVVFLLFMLFQFNLIGLAFM), 339-359 (VGFFVFLVGFVTQLATSSGFP), and 416-436 (VLTINDIYLWLLGTFFLWFVL). The ABC transporter domain occupies 518–763 (VQIRGLAKTY…FGTGFIANIS (246 aa)). 564 to 571 (GPNGAGKT) provides a ligand contact to ATP. A disordered region spans residues 963–983 (RSGSTSSRRFSRSGSSRRFSS).

It belongs to the ABC transporter superfamily. ABCA family. CPR flippase (TC 3.A.1.211) subfamily.

The protein localises to the membrane. The protein is ABC transporter A family member 2 (ABCA2) of Arabidopsis thaliana (Mouse-ear cress).